Reading from the N-terminus, the 47-residue chain is Large ribosomal subunit protein bL34 (47 aa).

It belongs to the bacterial ribosomal protein bL34 family.

This chain is Large ribosomal subunit protein bL34, found in Rhodococcus opacus (strain B4).